The primary structure comprises 243 residues: Uridylate kinase (243 aa).

Residue lysine 18 to glycine 21 participates in ATP binding. Glycine 59 contacts UMP. ATP is bound by residues glycine 60 and arginine 64. Residues aspartate 79 and methionine 140–threonine 147 contribute to the UMP site. ATP contacts are provided by tyrosine 173 and aspartate 176.

This sequence belongs to the UMP kinase family. Homohexamer.

It is found in the cytoplasm. It catalyses the reaction UMP + ATP = UDP + ADP. It participates in pyrimidine metabolism; CTP biosynthesis via de novo pathway; UDP from UMP (UMPK route): step 1/1. With respect to regulation, inhibited by UTP. Its function is as follows. Catalyzes the reversible phosphorylation of UMP to UDP. This Corynebacterium efficiens (strain DSM 44549 / YS-314 / AJ 12310 / JCM 11189 / NBRC 100395) protein is Uridylate kinase.